The primary structure comprises 116 residues: Heme-degrading monooxygenase (116 aa).

In terms of domain architecture, ABM spans V2–F92. N6 provides a ligand contact to Fe cation. Residue H76 coordinates heme.

Belongs to the antibiotic biosynthesis monooxygenase family. Heme-degrading monooxygenase IsdG subfamily. In terms of assembly, homodimer.

The protein localises to the cytoplasm. It catalyses the reaction heme b + 3 reduced [NADPH--hemoprotein reductase] + 3 O2 = biliverdin IXalpha + CO + Fe(2+) + 3 oxidized [NADPH--hemoprotein reductase] + 3 H2O + H(+). In terms of biological role, allows bacterial pathogens to use the host heme as an iron source. Catalyzes the oxidative degradation of the heme macrocyclic porphyrin ring to the biliverdin in the presence of a suitable electron donor such as ascorbate or NADPH--cytochrome P450 reductase, with subsequent release of free iron. This Halalkalibacterium halodurans (strain ATCC BAA-125 / DSM 18197 / FERM 7344 / JCM 9153 / C-125) (Bacillus halodurans) protein is Heme-degrading monooxygenase.